Here is a 299-residue protein sequence, read N- to C-terminus: 33 kDa chaperonin (299 aa).

Cystine bridges form between Cys-239-Cys-241 and Cys-272-Cys-275.

The protein belongs to the HSP33 family. Under oxidizing conditions two disulfide bonds are formed involving the reactive cysteines. Under reducing conditions zinc is bound to the reactive cysteines and the protein is inactive.

It is found in the cytoplasm. Redox regulated molecular chaperone. Protects both thermally unfolding and oxidatively damaged proteins from irreversible aggregation. Plays an important role in the bacterial defense system toward oxidative stress. In Acaryochloris marina (strain MBIC 11017), this protein is 33 kDa chaperonin.